The chain runs to 1235 residues: Gem-associated protein 5 (1235 aa).

A WD 1 repeat occupies 55–102 (STRINILALDVSPMWGLGNGGPTKPFAIVGDDLSVQVWDCALGEAVIG). Residues 227–263 (NNLALSAEEWRSRNGGQEEKPKTKPPPLTKSKAAESD) form a disordered region. Residues 234 to 248 (EEWRSRNGGQEEKPK) are compositionally biased toward basic and acidic residues. Ser-289, Ser-290, Ser-351, and Ser-354 each carry phosphoserine. The interval 340 to 368 (DCEPTKPTGPLSDASTISNKNDASDSTEG) is disordered. Positions 352–368 (DASTISNKNDASDSTEG) are enriched in polar residues. Thr-355 carries the phosphothreonine modification. A Phosphoserine modification is found at Ser-357. Thr-411 is modified (phosphothreonine). 7 WD repeats span residues 428-469 (ISAE…HAGK), 475-512 (KTAGKLNNVYWLNNHVIVSLSRHQLFFWSVEFERKMLR), 565-605 (TVAF…TSCL), 611-650 (YVSSNVYCLAWSPNCLELAFGTFDGTVGILDVERMKVKTH), 690-730 (TIVN…EKSW), 739-779 (LFAR…RNWK), and 788-828 (TEKA…KPPL). The LXXLL motif signature appears at 443–447 (LETLL). The segment covering 963 to 980 (KEQNNRSAKECPKCKEQS) has biased composition (basic and acidic residues). The interval 963 to 983 (KEQNNRSAKECPKCKEQSPDS) is disordered.

Component of the core survival motor neuron (SMN) complex composed of Smn, Gem2, Gem3, rig/Gem5 and one of 3 almost identical Gem4 paralogs encoded by Glos/Gem4a, Gem4b or Gem4c. Interacts with nuclear receptors EcR, svp (seven up), usp (ultraspiracle), Hr39 and Hr3. Expressed in the brain and salivary glands of early and late second instar larvae. Expressed in nurse cells and oocytes.

Its subcellular location is the nucleus. The protein resides in the cytoplasm. It localises to the U-body. It is found in the gem. Functionally, component of the survival motor neuron (SMN) complex that catalyzes the assembly of small nuclear ribonucleoproteins (snRNPs), the building blocks of the spliceosome, and thereby plays an important role in the splicing of cellular pre-mRNAs. Nuclear receptor cofactor for the ecdysone-regulated processes of molting and puparium formation. Acts downstream from ecdysone biosynthesis and release to control the expression of specific ecdysone-regulated genes such as Eip74EF (E74). Essential in muscle and neuronal tissues for motor function, including climbing ability and flight. This chain is Gem-associated protein 5, found in Drosophila melanogaster (Fruit fly).